Here is a 359-residue protein sequence, read N- to C-terminus: Small ribosomal subunit protein mS22 (359 aa).

The tract at residues 40–65 is disordered; that stretch reads RPQPFEVGQPRRLLSSEAESGSSEVK. Residue S54 is modified to Phosphoserine. Residue K210 is modified to N6-acetyllysine.

This sequence belongs to the mitochondrion-specific ribosomal protein mS22 family. In terms of assembly, component of the mitochondrial ribosome small subunit (28S) which comprises a 12S rRNA and about 30 distinct proteins.

It is found in the mitochondrion. This Mus musculus (Mouse) protein is Small ribosomal subunit protein mS22 (Mrps22).